A 636-amino-acid chain; its full sequence is Threonine--tRNA ligase (636 aa).

The TGS domain occupies 1–61; the sequence is MINITLPDDS…RNDCAVRLIT (61 aa). Positions 238–528 are catalytic; it reads DHRKIGTRMG…LVEHFAGKFP (291 aa). Residues C329, H380, and H505 each coordinate Zn(2+).

Belongs to the class-II aminoacyl-tRNA synthetase family. As to quaternary structure, homodimer. The cofactor is Zn(2+).

It is found in the cytoplasm. The catalysed reaction is tRNA(Thr) + L-threonine + ATP = L-threonyl-tRNA(Thr) + AMP + diphosphate + H(+). In terms of biological role, catalyzes the attachment of threonine to tRNA(Thr) in a two-step reaction: L-threonine is first activated by ATP to form Thr-AMP and then transferred to the acceptor end of tRNA(Thr). Also edits incorrectly charged L-seryl-tRNA(Thr). This is Threonine--tRNA ligase from Desulforapulum autotrophicum (strain ATCC 43914 / DSM 3382 / VKM B-1955 / HRM2) (Desulfobacterium autotrophicum).